A 381-amino-acid polypeptide reads, in one-letter code: Alkanesulfonate monooxygenase (381 aa).

It belongs to the SsuD family. Homotetramer.

The enzyme catalyses an alkanesulfonate + FMNH2 + O2 = an aldehyde + FMN + sulfite + H2O + 2 H(+). Functionally, catalyzes the desulfonation of aliphatic sulfonates. This chain is Alkanesulfonate monooxygenase, found in Cronobacter sakazakii (strain ATCC BAA-894) (Enterobacter sakazakii).